The following is a 317-amino-acid chain: DNA-directed RNA polymerase subunit alpha (317 aa).

Residues 1 to 234 (MKQFVRPEFI…AHLEFFIDLN (234 aa)) form an alpha N-terminal domain (alpha-NTD) region. The interval 250–317 (DKELDRTVEE…ASLGLAFRQS (68 aa)) is alpha C-terminal domain (alpha-CTD).

This sequence belongs to the RNA polymerase alpha chain family. As to quaternary structure, homodimer. The RNAP catalytic core consists of 2 alpha, 1 beta, 1 beta' and 1 omega subunit. When a sigma factor is associated with the core the holoenzyme is formed, which can initiate transcription.

It catalyses the reaction RNA(n) + a ribonucleoside 5'-triphosphate = RNA(n+1) + diphosphate. Functionally, DNA-dependent RNA polymerase catalyzes the transcription of DNA into RNA using the four ribonucleoside triphosphates as substrates. This Mycoplasma mycoides subsp. mycoides SC (strain CCUG 32753 / NCTC 10114 / PG1) protein is DNA-directed RNA polymerase subunit alpha.